The sequence spans 184 residues: Interferon alpha-1 (184 aa).

Positions 1-23 are cleaved as a signal peptide; the sequence is MALPVSLLMALVVLSCHSICSLG. Disulfide bonds link Cys-24–Cys-122 and Cys-52–Cys-162.

It belongs to the alpha/beta interferon family. As to quaternary structure, interacts with CR2.

Its subcellular location is the secreted. In terms of biological role, produced by macrophages, IFN-alpha have antiviral activities. Interferon stimulates the production of two enzymes: a protein kinase and an oligoadenylate synthetase. The protein is Interferon alpha-1 of Equus caballus (Horse).